A 247-amino-acid chain; its full sequence is E3 SUMO-protein ligase NSE2 (247 aa).

Met1 is modified (N-acetylmethionine). Residues Lys90 and Lys107 each participate in a glycyl lysine isopeptide (Lys-Gly) (interchain with G-Cter in SUMO2) cross-link. Residue Ser116 is modified to Phosphoserine. Residues Lys125 and Lys130 each participate in a glycyl lysine isopeptide (Lys-Gly) (interchain with G-Cter in SUMO2) cross-link. The SP-RING-type zinc-finger motif lies at 154-240; that stretch reads MDEDMIVTQS…LRRAIESHNK (87 aa). Zn(2+) contacts are provided by Cys185, His187, Cys210, and Cys215.

Belongs to the NSE2 family. As to quaternary structure, component of the SMC5-SMC6 complex which consists at least of SMC5, SMC6, NSMCE2, NSMCE1, NSMCE4A or EID3 and NSMCE3. Sumoylated, possibly via autosumoylation.

The protein resides in the nucleus. It is found in the chromosome. The protein localises to the telomere. Its subcellular location is the PML body. It participates in protein modification; protein sumoylation. In terms of biological role, E3 SUMO-protein ligase component of the SMC5-SMC6 complex, a complex involved in DNA double-strand break repair by homologous recombination. Is not be required for the stability of the complex. The complex may promote sister chromatid homologous recombination by recruiting the SMC1-SMC3 cohesin complex to double-strand breaks. Acts as an E3 ligase mediating SUMO attachment to various proteins such as SMC6L1 and TSNAX, the shelterin complex subunits TERF1, TERF2, TINF2 and TERF2IP, RAD51AP1, and maybe the cohesin components RAD21 and STAG2. Required for recruitment of telomeres to PML nuclear bodies. Required for sister chromatid cohesion during prometaphase and mitotic progression. This is E3 SUMO-protein ligase NSE2 (Nsmce2) from Rattus norvegicus (Rat).